A 129-amino-acid polypeptide reads, in one-letter code: Small ribosomal subunit protein uS12 (129 aa).

It belongs to the universal ribosomal protein uS12 family. Part of the 30S ribosomal subunit. Contacts proteins S8 and S17. May interact with IF1 in the 30S initiation complex.

Its function is as follows. With S4 and S5 plays an important role in translational accuracy. Interacts with and stabilizes bases of the 16S rRNA that are involved in tRNA selection in the A site and with the mRNA backbone. Located at the interface of the 30S and 50S subunits, it traverses the body of the 30S subunit contacting proteins on the other side and probably holding the rRNA structure together. The combined cluster of proteins S8, S12 and S17 appears to hold together the shoulder and platform of the 30S subunit. The sequence is that of Small ribosomal subunit protein uS12 from Rickettsia typhi (strain ATCC VR-144 / Wilmington).